A 678-amino-acid polypeptide reads, in one-letter code: Glutamic acid-rich protein (678 aa).

An N-terminal signal peptide occupies residues 1–25; that stretch reads MNVLFLSYNICILFFVVCTLNFSTK. The segment covering 56–79 has biased composition (basic and acidic residues); it reads EKNKDDNSKSETLLKEEKDEKDDV. 3 disordered regions span residues 56-194, 225-445, and 520-678; these read EKNK…NLDE, ISSV…VVKN, and VVPR…NAKI. The span at 80–107 shows a compositional bias: polar residues; the sequence is PTTSNDNLKNAHNNNEISSSTDPTNIIN. Residues 109-120 show a composition bias toward basic and acidic residues; it reads NDKDNENSVDKK. A run of 15 repeats spans residues 120–122, 123–125, 126–128, 129–131, 132–134, 135–137, 138–140, 141–143, 144–146, 147–149, 150–152, 153–155, 156–158, 159–161, and 162–164. The 15 X 3 AA tandem repeats of K-K-[DEHK] stretch occupies residues 120–164; sequence KKDKKEKKHKKDKKEKKEKKDKKEKKDKKEKKHKKEKKHKKDKKK. The span at 121 to 165 shows a compositional bias: basic residues; it reads KDKKEKKHKKDKKEKKEKKDKKEKKDKKEKKHKKEKKHKKDKKKK. 2 stretches are compositionally biased toward basic and acidic residues: residues 231–329 and 371–411; these read TSND…EEKE and PEEH…EHKS. 14 repeat units span residues 372–376, 377–381, 382–386, 387–391, 392–396, 397–401, 402–406, 407–411, 412–416, 417–421, 422–426, 427–431, 432–436, and 437–441. The tract at residues 372–416 is 9 X 5 AA tandem repeats of [EGK]-E-H-K-[EKS]; it reads EEHKEGEHKEEEHKEGEHKEGEHKEEEHKEEEHKKEEHKSKEHKS. Over residues 412–443 the composition is skewed to basic residues; the sequence is KEHKSKGKKDKGKKDKGKHKKAKKEKVKKHVV. The 5 X 5 AA tandem repeats of K-[GAV]-K-[KH]-[DKEH] stretch occupies residues 417–441; it reads KGKKDKGKKDKGKHKKAKKEKVKKH. Residues 532–565 show a composition bias toward basic and acidic residues; the sequence is AKIEEAELQKQKHVDKEEDKKEESKEVQEESKEV. Residues 566 to 663 show a composition bias toward acidic residues; the sequence is QEDEEEVEED…EEEEEEEEEE (98 aa). Residues 667 to 678 are compositionally biased toward basic residues; the sequence is KIKRNLRKNAKI.

This Plasmodium falciparum (isolate FC27 / Papua New Guinea) protein is Glutamic acid-rich protein (GARP).